The chain runs to 510 residues: Aromatic-L-amino-acid decarboxylase (510 aa).

Residues 1-17 (MSHIPISNTIPPKQTDG) show a composition bias toward polar residues. The interval 1-29 (MSHIPISNTIPPKQTDGNGKANISPDKLD) is disordered. Thr117 serves as a coordination point for substrate. Residues Ala183, Ser184, His227, Asp305, and Asn334 each coordinate pyridoxal 5'-phosphate. His227 is a binding site for substrate. Residue Lys337 is modified to N6-(pyridoxal phosphate)lysine. Residues 358–384 (NAFNVDPLYLKHDMQGSAPDYRHWQIP) form a disordered region.

The protein belongs to the group II decarboxylase family. Homodimer. Requires pyridoxal 5'-phosphate as cofactor.

The enzyme catalyses L-dopa + H(+) = dopamine + CO2. It carries out the reaction 5-hydroxy-L-tryptophan + H(+) = serotonin + CO2. Functionally, catalyzes the decarboxylation of L-3,4-dihydroxyphenylalanine (L-DOPA) to dopamine and L-5-hydroxytryptophan (5-HTP) to serotonin. Catalyzes the formation of serotonin more efficiently than dopamine. Displays no activity to tyrosine. Variation in the synthesis of bioamines may be a factor contributing to natural variation in life span. The polypeptide is Aromatic-L-amino-acid decarboxylase (Ddc) (Drosophila simulans (Fruit fly)).